The primary structure comprises 750 residues: uncharacterized protein (750 aa).

This is an uncharacterized protein from Escherichia coli (strain K12).